The chain runs to 336 residues: Holliday junction branch migration complex subunit RuvB (336 aa).

A large ATPase domain (RuvB-L) region spans residues 1–182 (MKERIVNLET…FGMSFRMQFY (182 aa)). ATP contacts are provided by residues L21, R22, G63, K66, T67, S68, 129–131 (EDF), R172, Y182, and R219. T67 contributes to the Mg(2+) binding site. A small ATPAse domain (RuvB-S) region spans residues 183 to 253 (SPSELALIIK…ITLHALNELG (71 aa)). Positions 256–336 (ELGFDEADLA…IPTLKSQTLF (81 aa)) are head domain (RuvB-H). 2 residues coordinate DNA: R310 and R315.

Belongs to the RuvB family. In terms of assembly, homohexamer. Forms an RuvA(8)-RuvB(12)-Holliday junction (HJ) complex. HJ DNA is sandwiched between 2 RuvA tetramers; dsDNA enters through RuvA and exits via RuvB. An RuvB hexamer assembles on each DNA strand where it exits the tetramer. Each RuvB hexamer is contacted by two RuvA subunits (via domain III) on 2 adjacent RuvB subunits; this complex drives branch migration. In the full resolvosome a probable DNA-RuvA(4)-RuvB(12)-RuvC(2) complex forms which resolves the HJ.

The protein resides in the cytoplasm. It carries out the reaction ATP + H2O = ADP + phosphate + H(+). In terms of biological role, the RuvA-RuvB-RuvC complex processes Holliday junction (HJ) DNA during genetic recombination and DNA repair, while the RuvA-RuvB complex plays an important role in the rescue of blocked DNA replication forks via replication fork reversal (RFR). RuvA specifically binds to HJ cruciform DNA, conferring on it an open structure. The RuvB hexamer acts as an ATP-dependent pump, pulling dsDNA into and through the RuvAB complex. RuvB forms 2 homohexamers on either side of HJ DNA bound by 1 or 2 RuvA tetramers; 4 subunits per hexamer contact DNA at a time. Coordinated motions by a converter formed by DNA-disengaged RuvB subunits stimulates ATP hydrolysis and nucleotide exchange. Immobilization of the converter enables RuvB to convert the ATP-contained energy into a lever motion, pulling 2 nucleotides of DNA out of the RuvA tetramer per ATP hydrolyzed, thus driving DNA branch migration. The RuvB motors rotate together with the DNA substrate, which together with the progressing nucleotide cycle form the mechanistic basis for DNA recombination by continuous HJ branch migration. Branch migration allows RuvC to scan DNA until it finds its consensus sequence, where it cleaves and resolves cruciform DNA. In Helicobacter pylori (strain G27), this protein is Holliday junction branch migration complex subunit RuvB.